The sequence spans 383 residues: Protein arginine N-methyltransferase PRMT10 (383 aa).

Positions 1 to 23 (MRSSQNGGAMGGRAAGTGGGGPS) are disordered. The span at 8–22 (GAMGGRAAGTGGGGP) shows a compositional bias: gly residues. An SAM-dependent MTase PRMT-type domain is found at 29 to 360 (EVDYAQYFCT…KENHRLMEIE (332 aa)). Gln-45, Arg-54, Gly-78, Glu-100, and Glu-129 together coordinate S-adenosyl-L-methionine. Catalysis depends on residues Glu-143 and Glu-152. Residues 190 to 230 (DRKRNDFDGAMADWHNFSDEIKSYYGVDMGVLTKPFAEEQE) are dimerization arm.

Belongs to the class I-like SAM-binding methyltransferase superfamily. Protein arginine N-methyltransferase family. As to quaternary structure, ring-like homodimer.

The enzyme catalyses L-arginyl-[protein] + 2 S-adenosyl-L-methionine = N(omega),N(omega)-dimethyl-L-arginyl-[protein] + 2 S-adenosyl-L-homocysteine + 2 H(+). Methylates (mono and asymmetric dimethylation) the guanidino nitrogens of arginyl residues in some proteins. Essential for regulating flowering time. This Arabidopsis thaliana (Mouse-ear cress) protein is Protein arginine N-methyltransferase PRMT10 (PRMT10).